The primary structure comprises 278 residues: Inosose isomerase (278 aa).

A divalent metal cation-binding residues include Glu-142, Asp-174, His-200, and Glu-246.

This sequence belongs to the IolI family. Requires a divalent metal cation as cofactor.

It carries out the reaction scyllo-inosose = scyllo-inosine. It functions in the pathway polyol metabolism; myo-inositol degradation into acetyl-CoA. In terms of biological role, involved in the reversible interconverion of 2-keto-myo-inositol (2KMI, inosose or 2,4,6/3,5-pentahydroxycyclohexanone) to 1-keto-D-chiro-inositol (1KDCI or 2,3,5/4,6-pentahydroxycyclohexanone). The protein is Inosose isomerase (iolI) of Bacillus licheniformis (strain ATCC 14580 / DSM 13 / JCM 2505 / CCUG 7422 / NBRC 12200 / NCIMB 9375 / NCTC 10341 / NRRL NRS-1264 / Gibson 46).